Consider the following 1438-residue polypeptide: Pyochelin synthetase PchE (1438 aa).

A Carrier 1 domain is found at Asp6–Asp85. Ser46 carries the post-translational modification O-(pantetheine 4'-phosphoryl)serine. The tract at residues Arg136–Ala442 is condensation/cyclization. Residues Arg563–Arg950 form an adenylation region. One can recognise a Carrier 2 domain in the interval Glu1350–Thr1425. At Ser1385 the chain carries O-(pantetheine 4'-phosphoryl)serine.

It belongs to the NRP synthetase family. The cofactor is pantetheine 4'-phosphate.

It carries out the reaction holo-[peptidyl-carrier protein] + L-cysteine + ATP = L-cysteinyl-[peptidyl-carrier protein] + AMP + diphosphate. It participates in siderophore biosynthesis. It functions in the pathway antifungal biosynthesis. Its function is as follows. Involved in the biosynthesis of the siderophore pyochelin. Accepts salicylate activated by PchD at the first peptidyl carrier domain (ArCP), and activates and fixes one molecule of cysteine at the second peptidyl carrier domain (PCP1) via a thioester linkage to the phosphopanthetheine moiety. Then catalyzes the condensation reaction between the salicylate bound to the first site and the cysteine bound to the second site, and the cyclization of the cysteine to form the salicyl-thiazolinyl-S-PCP1 intermediate at the second site. When this intermediate is released by the action of a thioesterase, it produces the antifungal antibiotic dihydroaeruginoic acid (Dha or hydroxyphenyl-thiazolinyl-carboxylate). In Pseudomonas aeruginosa (strain UCBPP-PA14), this protein is Pyochelin synthetase PchE.